Here is a 312-residue protein sequence, read N- to C-terminus: DNA-directed RNA polymerase subunit alpha (312 aa).

Positions 1-229 (MLQYQIDRID…ELFQPLATVT (229 aa)) are alpha N-terminal domain (alpha-NTD). The tract at residues 241-312 (SPEAQIPLEE…ISIPQSRTSV (72 aa)) is alpha C-terminal domain (alpha-CTD).

Belongs to the RNA polymerase alpha chain family. In terms of assembly, in cyanobacteria the RNAP catalytic core is composed of 2 alpha, 1 beta, 1 beta', 1 gamma and 1 omega subunit. When a sigma factor is associated with the core the holoenzyme is formed, which can initiate transcription.

It catalyses the reaction RNA(n) + a ribonucleoside 5'-triphosphate = RNA(n+1) + diphosphate. In terms of biological role, DNA-dependent RNA polymerase catalyzes the transcription of DNA into RNA using the four ribonucleoside triphosphates as substrates. This Prochlorococcus marinus (strain MIT 9215) protein is DNA-directed RNA polymerase subunit alpha.